The chain runs to 643 residues: MKIHIVQKGDTLWKIAKKYGVDFDTLKKTNTQLSNPDLIMPGMKIKVPSKSVHMKQQAGAGSAPPKQYVKEVQQKEFAATPTPLGIEDEEEVTYQSAPITQQPAMQQTQKEVQIKPQKEMQVKPQKEVQVKPQKEMQVKPQKEVQKEQPIQKEKPVEKPSVIQKPPVIEKQKPAEKENTKFSVNVLPQPPQPPIKPKKEYKISDVIKKGSELIAPQISKMKPNNIISPQTKKNNIISPQVKKENVGNIVSPQVKKENVGNIVSPQVKKENVGNIVSPQVKKENVGNIVSPQVKKENVGNIVSPQVKKENVGNIVSPQVKKENVGNIVSPNVSKENVVIPQVIPPNIQMPNIMPIMDNNQPPNIMPIMDNNQPPNIMPIMDNNQMPNMMPIMDNNQMPNMMPIMDNNQMPNMMPIMDNNQMPNMMPIMDNNQMPNMMPIMDNNQMPNMMPIMDNNQMPNMMPIMDNNQMPNIMPIMDNNQMPNMMPIMDNNQMPNIMPIMDNNQMPNMMPIMDNNQPPNMMPYQMPYQQPMMPPNPYYQQPNPYQMPYQQGAPFGPQHTSMPNQNMMPMDNNMPPLVQGEEDCGCGGESRLYSPQPGGPQYANPLYYQPTQSAYAPQPGTMYYQPDPPNVFGEPVSEEEDEEEV.

The region spanning 2-47 (KIHIVQKGDTLWKIAKKYGVDFDTLKKTNTQLSNPDLIMPGMKIKV) is the LysM domain. Repeat copies occupy residues 113-120 (QIKPQKEM), 121-128 (QVKPQKEV), 129-136 (QVKPQKEM), 137-144 (QVKPQKEV), 238-250 (PQVK…NIVS), 251-263 (PQVK…NIVS), 264-276 (PQVK…NIVS), 277-289 (PQVK…NIVS), 290-302 (PQVK…NIVS), 303-315 (PQVK…NIVS), 316-328 (PQVK…NIVS), 354-365 (IMDNNQPPNIMP), 366-377 (IMDNNQPPNIMP), 378-389 (IMDNNQMPNMMP), 390-401 (IMDNNQMPNMMP), 402-413 (IMDNNQMPNMMP), 414-425 (IMDNNQMPNMMP), 426-437 (IMDNNQMPNMMP), 438-449 (IMDNNQMPNMMP), 450-461 (IMDNNQMPNMMP), 462-473 (IMDNNQMPNIMP), 474-485 (IMDNNQMPNMMP), 486-497 (IMDNNQMPNIMP), 498-509 (IMDNNQMPNMMP), and 510-521 (IMDNNQPPNMMP). The 4 X 8 AA tandem repeats of Q-[IV]-K-P-Q-K-E-[MV] stretch occupies residues 113–144 (QIKPQKEMQVKPQKEVQVKPQKEMQVKPQKEV). A compositionally biased stretch (basic and acidic residues) spans 115–157 (KPQKEMQVKPQKEVQVKPQKEMQVKPQKEVQKEQPIQKEKPVE). The disordered stretch occupies residues 115 to 160 (KPQKEMQVKPQKEVQVKPQKEMQVKPQKEVQKEQPIQKEKPVEKPS). The 7 X 13 AA tandem repeats of P-Q-V-K-K-E-N-V-G-N-I-V-S stretch occupies residues 238–328 (PQVKKENVGN…KKENVGNIVS (91 aa)). Residues 354–521 (IMDNNQPPNI…DNNQPPNMMP (168 aa)) are 14 X 12 AA tandem repeats of I-M-D-N-N-Q-[MP]-P-N-[IM]-M-P. The interval 585 to 643 (GGESRLYSPQPGGPQYANPLYYQPTQSAYAPQPGTMYYQPDPPNVFGEPVSEEEDEEEV) is disordered. The segment covering 634–643 (VSEEEDEEEV) has biased composition (acidic residues).

The protein to B.subtilis SafA.

Functionally, required for the normal assembly and anchoring of both the spore coat and the exosporium layers. This Bacillus cereus protein is Spore coat assembly protein ExsA (exsA).